The primary structure comprises 87 residues: Type 3 secretion system needle filament protein (87 aa).

This sequence belongs to the SctF family. The core secretion machinery of the T3SS is composed of approximately 20 different proteins, including cytoplasmic components, a base, an export apparatus and a needle. This subunit polymerizes and forms the helical needle filament. Forms high-order oligomers in vitro. Forms a stable ternary complex with the YscE-YscG chaperone. Interacts directly with YscG but makes very little direct contact with YscE. Interacts with the needle adapter protein YscI/SctI.

It localises to the secreted. It is found in the cell surface. The secretion and/or polymerization may be controlled by the type III secretion system regulator YopR. Interaction with YscE-YscG chaperone prevents premature polymerization of YscF/SctF in the bacterial cytosol and is required for its stability and efficient secretion. Interaction with the needle adapter protein YscI/SctI is required for YscF/SctF secretion, needle assembly and Yop secretion. The N-terminus varies among bacterial species, not only in amino acid composition but also in the number of amino acids, and may function in manipulating the host response to the advantage of the bacteria. In Y.pestis, the N-terminus can function to decrease cytokine induction, perhaps contributing to a favorable immune environment leading to survival of Y.pestis within the eukaryotic host. Functionally, component of the type III secretion system (T3SS), also called injectisome, which is used to inject bacterial effector proteins into eukaryotic host cells. YscF/SctF forms the external needle filament that protrudes from the bacterial surface. Essential for the calcium-dependent regulation of T3SS and Yop secretion. Required to block Yop secretion in the presence of extracellular calcium. May be the extracellular T3SS component that senses extracellular calcium and/or participates in transmitting the calcium signal to the cytoplasmic compartment where the block in secretion is initiated. Its function is as follows. During infection, can induce innate immune responses. The needle proteins interact with host TLR2 or TLR4, and induce signaling by NF-kappa-B and/or AP-1. This activation is MyD88 dependent and results in increased expression of cytokines, including TNF-alpha, IL-6 and IL-8. Innate immune responses are modulated by the N-terminal region of YscF/SctF. In Yersinia pestis, this protein is Type 3 secretion system needle filament protein.